The sequence spans 259 residues: Protein odd-skipped-related 1 (259 aa).

3 C2H2-type zinc fingers span residues 168–190, 196–218, and 224–246; these read FVCK…ERTH, YTCD…RYIH, and FKCQ…KTLH.

The protein belongs to the Odd C2H2-type zinc-finger protein family. In terms of tissue distribution, at early gastrula stage, expressed in the involuting mesoderm and endoderm. During neurulation, expressed in the pronephric primordium, following expression of osr2. During tailbud (stage 35), expressed in the rectal diverticulum and in the kidney ducts.

It is found in the nucleus. Transcriptional repressor. Required for pronephric kidney development. This is Protein odd-skipped-related 1 from Xenopus laevis (African clawed frog).